The sequence spans 118 residues: Large ribosomal subunit protein bL20c (118 aa).

Belongs to the bacterial ribosomal protein bL20 family.

It localises to the plastid. Its subcellular location is the chloroplast. Binds directly to 23S ribosomal RNA and is necessary for the in vitro assembly process of the 50S ribosomal subunit. It is not involved in the protein synthesizing functions of that subunit. The chain is Large ribosomal subunit protein bL20c from Gracilaria tenuistipitata var. liui (Red alga).